We begin with the raw amino-acid sequence, 1024 residues long: Multidrug resistance protein MdtC (1024 aa).

12 helical membrane-spanning segments follow: residues 12 to 32 (VATT…FSLL), 333 to 353 (EVER…FIFL), 360 to 380 (LIPA…MYLC), 387 to 407 (LSLM…IVVL), 435 to 455 (VLSM…MAGL), 469 to 489 (VAIG…CAWL), 528 to 548 (WVMV…ISIP), 853 to 873 (LWLI…LYES), 875 to 895 (VHPL…LLAL), 897 to 917 (LFDA…IGIV), 953 to 973 (PIIM…LSSG), and 984 to 1004 (ITIV…TPVI).

The protein belongs to the resistance-nodulation-cell division (RND) (TC 2.A.6) family. MdtC subfamily. As to quaternary structure, part of a tripartite efflux system composed of MdtA, MdtB and MdtC. MdtC forms a heteromultimer with MdtB.

The protein localises to the cell inner membrane. This is Multidrug resistance protein MdtC from Yersinia pseudotuberculosis serotype O:1b (strain IP 31758).